The sequence spans 443 residues: Crh-like protein 2 (443 aa).

The signal sequence occupies residues 1-20 (MVRIGSSLLLATLAATTVSA). A GH16 domain is found at 21–306 (ASDPPKCSQD…TVECYDPPSG (286 aa)). Cys-56 and Cys-67 form a disulfide bridge. Glu-164 (nucleophile) is an active-site residue. Catalysis depends on Glu-168, which acts as the Proton donor. Glu-168 serves as a coordination point for chitin. N-linked (GlcNAc...) asparagine glycans are attached at residues Asn-194 and Asn-237. The chitin site is built by Trp-257 and Thr-268. N-linked (GlcNAc...) asparagine glycans are attached at residues Asn-332 and Asn-359. Composition is skewed to low complexity over residues 350 to 367 (ASSSASGSANKTSSSANT) and 378 to 410 (EPGNSHSGSSGSGTSTSDGSGSSTGFSQGSETS). Residues 350 to 420 (ASSSASGSAN…ASSNKNAAPS (71 aa)) form a disordered region. Polar residues predominate over residues 411–420 (ASSNKNAAPS). Asn-416 carries the GPI-like-anchor amidated asparagine lipid modification. Residues 417–443 (AAPSQNERVLNGSFFAVLVAVVALVTL) constitute a propeptide, removed in mature form. The N-linked (GlcNAc...) asparagine glycan is linked to Asn-427.

Belongs to the glycosyl hydrolase 16 family. CRH1 subfamily. In terms of processing, the GPI-like anchor contains a phosphoceramide lipid group. The anchor position has not been determined.

Its subcellular location is the cell membrane. The protein resides in the secreted. It is found in the cell wall. It catalyses the reaction Random endo-hydrolysis of N-acetyl-beta-D-glucosaminide (1-&gt;4)-beta-linkages in chitin and chitodextrins.. Dual chitinase/transglycosylase that plays a role in cell wall architecture. Chitinase and transglycosylase activities are coupled. Required for the polysaccharide cross-linking at the septa and the cell wall. More specifically, transfers chitin to 1,6-beta-glucan in the cell wall. The protein is Crh-like protein 2 of Aspergillus fumigatus (strain ATCC MYA-4609 / CBS 101355 / FGSC A1100 / Af293) (Neosartorya fumigata).